The sequence spans 120 residues: Large ribosomal subunit protein bL19 (120 aa).

It belongs to the bacterial ribosomal protein bL19 family.

Its function is as follows. This protein is located at the 30S-50S ribosomal subunit interface and may play a role in the structure and function of the aminoacyl-tRNA binding site. The chain is Large ribosomal subunit protein bL19 from Kocuria rhizophila (strain ATCC 9341 / DSM 348 / NBRC 103217 / DC2201).